The sequence spans 802 residues: E3 ubiquitin-protein ligase UHRF2 (802 aa).

The region spanning 1–78 is the Ubiquitin-like domain; sequence MWIQVRTIDG…IQLLVRPDPD (78 aa). 2 disordered regions span residues 80-116 and 153-197; these read LPGT…TSAR and RASD…STSN. 3 stretches are compositionally biased toward polar residues: residues 82 to 96, 153 to 177, and 188 to 197; these read GTST…SNSP, RASD…TNGN, and KLDSVPSTSN. The segment at 117–311 is required for interaction with histone H3; sequence ARLIDPGFGI…VDEIFKIERP (195 aa). Residues 194 to 288 form an interaction with PCNP region; it reads STSNSDCVAA…KELRVKIFLG (95 aa). Residues 344–395 form a PHD-type zinc finger; the sequence is SCSCRVCGGKHEPNMQLLCDECNVAYHIYCLNPPLDKVPEEEYWYCPSCKTD. Residues 414-644 form a methyl-CpG binding and interaction with HDAC1 region; sequence KMPSASTESR…LQYPAGYPSD (231 aa). The YDG domain occupies 448–612; it reads GPIPGIPVGS…FLVWRYLLRR (165 aa). Positions 640-674 are disordered; sequence GYPSDKEGKKPKGQSKKQPSGTTKRPISDDDCPSA. At Ser-667 the chain carries Phosphoserine. The RING-type zinc finger occupies 733–772; that stretch reads CVCCQELVYQPVTTECFHNVCKDCLQRSFKAQVFSCPACR.

In terms of assembly, homodimer; disulfide-linked. Binds methylated CpG containing oligonucleotides. Interacts with H3; the interaction has a preference for the 'Lys-9' trimethylated form of H3 (H3K9me3). Interacts with PCNP. Interacts with HDAC1. Interacts directly with CCNE1; the interaction ubiquitinates CCNE1 and appears independent of CCNE1 phosphorylation. Interacts with CCND1; the interaction ubiquitinates CCND1 and appears independent of CCND1 phosphorylation. Interacts with p53/TP53 and RB1. Interacts with UBE2I. Interacts with ZNF618. Interacts with UHRF1. Interacts with FANCD2. Interacts with ATR. Interacts with PCNA. In terms of processing, may be autoubiquitinated; which may lead to proteasomal degradation. Post-translationally, phosphorylated. Phosphorylation may be mediated by CDK2. Autosumoylated.

The protein resides in the nucleus. The protein localises to the chromosome. It catalyses the reaction S-ubiquitinyl-[E2 ubiquitin-conjugating enzyme]-L-cysteine + [acceptor protein]-L-lysine = [E2 ubiquitin-conjugating enzyme]-L-cysteine + N(6)-ubiquitinyl-[acceptor protein]-L-lysine.. It participates in protein modification; protein ubiquitination. With respect to regulation, E3 ligase activity is robustly activated by 5-hydroxymethylcytosine. In terms of biological role, E3 ubiquitin ligase that plays important roles in DNA methylation, histone modifications, cell cycle and DNA repair. Acts as a specific reader for 5-hydroxymethylcytosine (5hmC) and thereby recruits various substrates to these sites to ubiquitinate them. This activity also allows the maintenance of 5mC levels at specific genomic loci and regulates neuron-related gene expression. Participates in cell cycle regulation by ubiquitinating cyclins CCND1 and CCNE1 and thereby inducing G1 arrest. Also ubiquitinates PCNP leading to its degradation by the proteasome. Plays an active role in DNA damage repair by ubiquitinating p21/CDKN1A leading to its proteasomal degradation. Also promotes DNA repair by acting as an interstrand cross-links (ICLs) sensor. Mechanistically, cooperates with UHRF1 to ensure recruitment of FANCD2 to ICLs, leading to FANCD2 monoubiquitination and subsequent activation. Contributes to UV-induced DNA damage response by physically interacting with ATR in response to irradiation, thereby promoting ATR activation. In Homo sapiens (Human), this protein is E3 ubiquitin-protein ligase UHRF2 (UHRF2).